We begin with the raw amino-acid sequence, 445 residues long: Ubiquitin carboxyl-terminal hydrolase MINDY-3 (445 aa).

Cys-51 functions as the Nucleophile in the catalytic mechanism. At Ser-125 the chain carries Phosphoserine. His-287 (proton acceptor) is an active-site residue.

This sequence belongs to the MINDY deubiquitinase family. FAM188 subfamily. In terms of assembly, interacts with COPS5. Widely expressed with high levels in heart, skeletal muscle, and kidney, and low levels in liver and brain. Also expressed in lung (at protein level).

The protein resides in the nucleus. It carries out the reaction Thiol-dependent hydrolysis of ester, thioester, amide, peptide and isopeptide bonds formed by the C-terminal Gly of ubiquitin (a 76-residue protein attached to proteins as an intracellular targeting signal).. Functionally, hydrolase that can remove 'Lys-48'-linked conjugated ubiquitin from proteins. The chain is Ubiquitin carboxyl-terminal hydrolase MINDY-3 from Homo sapiens (Human).